A 112-amino-acid polypeptide reads, in one-letter code: ATP synthase epsilon chain (112 aa).

Belongs to the ATPase epsilon chain family. As to quaternary structure, F-type ATPases have 2 components, CF(1) - the catalytic core - and CF(0) - the membrane proton channel. CF(1) has five subunits: alpha(3), beta(3), gamma(1), delta(1), epsilon(1). CF(0) has three main subunits: a, b and c.

Its subcellular location is the cell membrane. In terms of biological role, produces ATP from ADP in the presence of a proton gradient across the membrane. The sequence is that of ATP synthase epsilon chain from Rickettsia africae (strain ESF-5).